A 91-amino-acid polypeptide reads, in one-letter code: Non-specific lipid-transfer protein 1 (91 aa).

4 disulfides stabilise this stretch: C4–C51, C14–C28, C29–C74, and C49–C88.

The protein belongs to the plant LTP family. In terms of tissue distribution, detected in seeds (at protein level).

Its function is as follows. Plant non-specific lipid-transfer proteins transfer phospholipids as well as galactolipids across membranes. May play a role in wax or cutin deposition in the cell walls of expanding epidermal cells and certain secretory tissues. The polypeptide is Non-specific lipid-transfer protein 1 (Carum carvi (Caraway)).